Consider the following 410-residue polypeptide: Benzene 1,2-dioxygenase system ferredoxin--NAD(+) reductase subunit (410 aa).

Residue 4 to 35 participates in FAD binding; the sequence is HVAIIGNGVAGFTTAQALRAEGYEGRISLIGE. 145–173 provides a ligand contact to NAD(+); it reads RLLIVGGGLIGCEVATTARKLGLSVTILE.

The protein belongs to the bacterial ring-hydroxylating dioxygenase ferredoxin reductase family. As to quaternary structure, this dioxygenase system consists of four proteins: the two subunits of the hydroxylase component (BedC1 and BedC2), a ferredoxin (BedB) and a ferredoxin reductase (BedA). The cofactor is FAD.

It carries out the reaction 2 reduced [2Fe-2S]-[ferredoxin] + NAD(+) + H(+) = 2 oxidized [2Fe-2S]-[ferredoxin] + NADH. It participates in aromatic compound metabolism; benzene degradation; catechol from benzene: step 1/2. In terms of biological role, part of the electron transfer component of benzene 1,2-dioxygenase, transfers electrons from ferredoxin to NADH. In Pseudomonas putida (Arthrobacter siderocapsulatus), this protein is Benzene 1,2-dioxygenase system ferredoxin--NAD(+) reductase subunit (bedA).